Here is a 213-residue protein sequence, read N- to C-terminus: Immunoglobulin lambda-like polypeptide 1 (213 aa).

An N-terminal signal peptide occupies residues M1–G37. The tract at residues V97–S108 is j region. The segment at Q109–S213 is c region. The Ig-like C1-type domain maps to P114–A208. A disulfide bridge links C135 with C194.

As to quaternary structure, associates non-covalently with VPREB1. Interacts with SYNV1/HRD1 (via N-terminus); this interaction leads to increased IGLL1 ubiquitination and degradation in pre-B cells, possibly through a lysosomal, not proteasomal, pathway. As to expression, expressed only in pre-B-cells and a special B-cell line (which is surface Ig negative).

Its subcellular location is the endoplasmic reticulum. The protein resides in the secreted. In terms of biological role, critical for B-cell development. The protein is Immunoglobulin lambda-like polypeptide 1 (IGLL1) of Homo sapiens (Human).